A 154-amino-acid chain; its full sequence is Ribonuclease H (154 aa).

One can recognise an RNase H type-1 domain in the interval glutamate 5 to aspartate 146. Mg(2+) contacts are provided by aspartate 14, glutamate 52, aspartate 74, and aspartate 138.

This sequence belongs to the RNase H family. In terms of assembly, monomer. Requires Mg(2+) as cofactor.

It localises to the cytoplasm. It carries out the reaction Endonucleolytic cleavage to 5'-phosphomonoester.. Functionally, endonuclease that specifically degrades the RNA of RNA-DNA hybrids. The chain is Ribonuclease H from Coxiella burnetii (strain CbuK_Q154) (Coxiella burnetii (strain Q154)).